The following is a 317-amino-acid chain: MDFKDYYKILGVEPTADEKAIKAAYRKLARKYHPDVSKERDAEEKFKEANEAYEVLGDAQKRAEFDEIRKYGGQHGRPFQAPPGWENRGGAGGGFEGGDFSDFFSSIFGARGGNPFGGARQQRSAGRRGQDVELELAIFLEETLSKESKQISFQVPQTNAAGQRTGFTTKTLNVKIPAGVSDGERIRLKGQGAPGSAGGANGDLFLTIRMAPHPLFDVEGQDLIITVPLAPWEAALGTKVAVPTLDGKINLTIRPDSQSGQRLRVPGKGLANKQGERGNLYAQLKVVMPPASDASTRQLWTQLSEKAAFNPRTQWSK.

One can recognise a J domain in the interval 5 to 69 (DYYKILGVEP…QKRAEFDEIR (65 aa)).

The protein localises to the cytoplasm. It localises to the nucleoid. Functionally, DNA-binding protein that preferentially recognizes a curved DNA sequence. It is probably a functional analog of DnaJ; displays overlapping activities with DnaJ, but functions under different conditions, probably acting as a molecular chaperone in an adaptive response to environmental stresses other than heat shock. Lacks autonomous chaperone activity; binds native substrates and targets them for recognition by DnaK. Its activity is inhibited by the binding of CbpM. The polypeptide is Curved DNA-binding protein (Pseudomonas putida (strain W619)).